Consider the following 167-residue polypeptide: Mediator of RNA polymerase II transcription subunit 10 (167 aa).

A disordered region spans residues 53-88 (LSTHTKPQPPSQDEEQKEKQDDTPEGSANDPLLRDI).

The protein belongs to the Mediator complex subunit 10 family. As to quaternary structure, component of the Mediator complex.

The protein localises to the nucleus. Component of the Mediator complex, a coactivator involved in the regulated transcription of nearly all RNA polymerase II-dependent genes. Mediator functions as a bridge to convey information from gene-specific regulatory proteins to the basal RNA polymerase II transcription machinery. Mediator is recruited to promoters by direct interactions with regulatory proteins and serves as a scaffold for the assembly of a functional preinitiation complex with RNA polymerase II and the general transcription factors. This Neosartorya fischeri (strain ATCC 1020 / DSM 3700 / CBS 544.65 / FGSC A1164 / JCM 1740 / NRRL 181 / WB 181) (Aspergillus fischerianus) protein is Mediator of RNA polymerase II transcription subunit 10 (nut2).